The primary structure comprises 257 residues: Imidazole glycerol phosphate synthase subunit HisF (257 aa).

Residues D11 and D130 contribute to the active site.

It belongs to the HisA/HisF family. In terms of assembly, heterodimer of HisH and HisF.

The protein localises to the cytoplasm. The catalysed reaction is 5-[(5-phospho-1-deoxy-D-ribulos-1-ylimino)methylamino]-1-(5-phospho-beta-D-ribosyl)imidazole-4-carboxamide + L-glutamine = D-erythro-1-(imidazol-4-yl)glycerol 3-phosphate + 5-amino-1-(5-phospho-beta-D-ribosyl)imidazole-4-carboxamide + L-glutamate + H(+). It functions in the pathway amino-acid biosynthesis; L-histidine biosynthesis; L-histidine from 5-phospho-alpha-D-ribose 1-diphosphate: step 5/9. In terms of biological role, IGPS catalyzes the conversion of PRFAR and glutamine to IGP, AICAR and glutamate. The HisF subunit catalyzes the cyclization activity that produces IGP and AICAR from PRFAR using the ammonia provided by the HisH subunit. In Aliivibrio salmonicida (strain LFI1238) (Vibrio salmonicida (strain LFI1238)), this protein is Imidazole glycerol phosphate synthase subunit HisF.